A 240-amino-acid chain; its full sequence is PF03932 family protein CutC (240 aa).

Belongs to the CutC family.

It is found in the cytoplasm. The polypeptide is PF03932 family protein CutC (Xanthomonas campestris pv. campestris (strain 8004)).